The following is a 156-amino-acid chain: ATP synthase subunit b (156 aa).

The chain crosses the membrane as a helical span at residues 7 to 29; it reads LLGQAISFGMFVWFCMKYVWPPI.

It belongs to the ATPase B chain family. In terms of assembly, F-type ATPases have 2 components, F(1) - the catalytic core - and F(0) - the membrane proton channel. F(1) has five subunits: alpha(3), beta(3), gamma(1), delta(1), epsilon(1). F(0) has three main subunits: a(1), b(2) and c(10-14). The alpha and beta chains form an alternating ring which encloses part of the gamma chain. F(1) is attached to F(0) by a central stalk formed by the gamma and epsilon chains, while a peripheral stalk is formed by the delta and b chains.

It localises to the cell inner membrane. Functionally, f(1)F(0) ATP synthase produces ATP from ADP in the presence of a proton or sodium gradient. F-type ATPases consist of two structural domains, F(1) containing the extramembraneous catalytic core and F(0) containing the membrane proton channel, linked together by a central stalk and a peripheral stalk. During catalysis, ATP synthesis in the catalytic domain of F(1) is coupled via a rotary mechanism of the central stalk subunits to proton translocation. In terms of biological role, component of the F(0) channel, it forms part of the peripheral stalk, linking F(1) to F(0). In Vibrio cholerae serotype O1 (strain ATCC 39541 / Classical Ogawa 395 / O395), this protein is ATP synthase subunit b.